Here is a 60-residue protein sequence, read N- to C-terminus: Large ribosomal subunit protein bL32 (60 aa).

Positions 1–16 (MAVPRRKTSPSRRGMR) are enriched in basic residues. A disordered region spans residues 1–60 (MAVPRRKTSPSRRGMRRSADAIKRPTYVEDKDSGELRRPHHLDLKTGMYKGRQVLKKKDS). Residues 17–44 (RSADAIKRPTYVEDKDSGELRRPHHLDL) show a composition bias toward basic and acidic residues.

This chain is Large ribosomal subunit protein bL32, found in Rhodopseudomonas palustris (strain ATCC BAA-98 / CGA009).